A 156-amino-acid polypeptide reads, in one-letter code: Arginine repressor (156 aa).

The protein belongs to the ArgR family.

The protein localises to the cytoplasm. Its pathway is amino-acid biosynthesis; L-arginine biosynthesis [regulation]. In terms of biological role, regulates arginine biosynthesis genes. The sequence is that of Arginine repressor from Vibrio atlanticus (strain LGP32) (Vibrio splendidus (strain Mel32)).